A 314-amino-acid polypeptide reads, in one-letter code: 4-diphosphocytidyl-2-C-methyl-D-erythritol kinase (314 aa).

The active site involves K11. P95–T105 is an ATP binding site. D137 is a catalytic residue.

The protein belongs to the GHMP kinase family. IspE subfamily.

It carries out the reaction 4-CDP-2-C-methyl-D-erythritol + ATP = 4-CDP-2-C-methyl-D-erythritol 2-phosphate + ADP + H(+). The protein operates within isoprenoid biosynthesis; isopentenyl diphosphate biosynthesis via DXP pathway; isopentenyl diphosphate from 1-deoxy-D-xylulose 5-phosphate: step 3/6. Its function is as follows. Catalyzes the phosphorylation of the position 2 hydroxy group of 4-diphosphocytidyl-2C-methyl-D-erythritol. The protein is 4-diphosphocytidyl-2-C-methyl-D-erythritol kinase of Synechococcus elongatus (strain ATCC 33912 / PCC 7942 / FACHB-805) (Anacystis nidulans R2).